We begin with the raw amino-acid sequence, 396 residues long: (S)-8-oxocitronellyl enol synthase ISY2 (396 aa).

Residues 38 to 40 (TGL), 66 to 67 (RR), 84 to 85 (DV), 108 to 109 (TW), glutamine 146, tyrosine 182, isoleucine 209, and 216 to 218 (SMM) each bind NADP(+). The active site involves tyrosine 182.

This sequence belongs to the short-chain dehydrogenases/reductases (SDR) family.

It catalyses the reaction (S)-8-oxocitronellyl enol + NADP(+) = (6E)-8-oxogeranial + NADPH + H(+). The catalysed reaction is (S)-8-oxocitronellyl enol + NAD(+) = (6E)-8-oxogeranial + NADH + H(+). In terms of biological role, iridoid synthase that catalyzes the first step in generation of the iridoid ring scaffold using the linear monoterpene (6E)-8-oxogeranial as substrate. Iridoids comprise a large family of distinctive bicyclic monoterpenes that possess a wide range of pharmacological activities, including anticancer, anti-inflammatory, antifungal and antibacterial activities. Catalyzes the conversion of the linear monoterpene (6E)-8-oxogeranial to (S)-8-oxocitronellyl enol, a precursor of nepetalactones, which are metabolites that are both insect-repellent and have euphoric effect in cats. The polypeptide is (S)-8-oxocitronellyl enol synthase ISY2 (Nepeta racemosa (Catmint)).